The primary structure comprises 259 residues: Undecaprenyl-diphosphatase (259 aa).

Transmembrane regions (helical) follow at residues 1-21, 40-60, 75-95, 101-121, 179-199, 206-226, and 239-259; these read MEIF…FLPI, QITL…IIFW, WLTI…ILFE, LFSS…LLYL, SFLL…KDAL, LTWL…YFAI, and TVFA…AGIF.

Belongs to the UppP family.

It is found in the cell inner membrane. The enzyme catalyses di-trans,octa-cis-undecaprenyl diphosphate + H2O = di-trans,octa-cis-undecaprenyl phosphate + phosphate + H(+). Its function is as follows. Catalyzes the dephosphorylation of undecaprenyl diphosphate (UPP). Confers resistance to bacitracin. This chain is Undecaprenyl-diphosphatase, found in Halothermothrix orenii (strain H 168 / OCM 544 / DSM 9562).